The sequence spans 1196 residues: NACHT, LRR and PYD domains-containing protein 1b allele 5 (1196 aa).

The interval 1-22 is disordered; sequence MEESPPKQKSNTKVTQHEGQQD. One can recognise an NACHT domain in the interval 126-435; the sequence is QLVIIEGAAG…EFFAAISCIL (310 aa). 132-139 is an ATP binding site; the sequence is GAAGIGKS. 2 LRR repeats span residues 627–647 and 684–704; these read NLEG…QSLC and SLTE…RMLC. The interval 789 to 922 is ZU5; the sequence is FWGPTGPVAT…GYTVLKNPSF (134 aa). Residues 789–1072 enclose the FIIND domain; the sequence is FWGPTGPVAT…KFDHLCDQEF (284 aa). The UPA stretch occupies residues 923 to 1072; the sequence is SPMGVVLRII…KFDHLCDQEF (150 aa). In terms of domain architecture, CARD spans 1106 to 1189; that stretch reads HFMDQHREQL…HLVMDLFEKS (84 aa).

Belongs to the NLRP family. Interacts with DPP9; leading to inhibit activation of the inflammasome. DPP9 acts via formation of a ternary complex, composed of a DPP9 homodimer, one full-length Nlrp1b protein, and one cleaved C-terminus of Nlrp1b (NACHT, LRR and PYD domains-containing protein 1b, C-terminus). Interacts with DPP8; leading to inhibit activation of the inflammasome, probably via formation of a ternary complex with DPP8. Interacts (via LRR repeats) with BCL2 and BCL2L1 (via the loop between motifs BH4 and BH3). Interacts with NOD2; this interaction may increase IL1B release. Interacts with EIF2AK2/PKR; this interaction requires EIF2AK2 activity, is accompanied by EIF2AK2 autophosphorylation and promotes inflammasome assembly in response to B.anthracis lethal toxin. Interacts with MEFV; this interaction targets Nlrp1b to degradation by autophagy, hence preventing excessive IL1B- and IL18-mediated inflammation. As to quaternary structure, interacts with the C-terminal part of Nlrp1b (NACHT, LRR and PYD domains-containing protein 1b, C-terminus) in absence of pathogens and other damage-associated signals. In terms of assembly, interacts with the N-terminal part of Nlrp1b (NACHT, LRR and PYD domains-containing protein 1b, N-terminus) in absence of pathogens and other damage-associated signals. Homomultimer; forms the Nlrp1b inflammasome polymeric complex, a filament composed of homopolymers of this form in response to pathogens and other damage-associated signals. The Nlrp1b inflammasome polymeric complex directly recruits pro-caspase-1 (proCASP1) independently of PYCARD/ASC. Interacts (via CARD domain) with CASP1 (via CARD domain); leading to CASP1 activation. Post-translationally, autocatalytically cleaved. Autocatalytic cleavage in FIIND region occurs constitutively, prior to activation signals, and is required for inflammasome activity (IL1B release), possibly by facilitating CASP1 binding. Both N- and C-terminal parts remain associated non-covalently. Ubiquitinated by the N-end rule pathway in response to pathogens and other damage-associated signals, leading to its degradation by the proteasome and subsequent release of the cleaved C-terminal part of the protein (NACHT, LRR and PYD domains-containing protein 1b, C-terminus), which polymerizes and forms the Nlrp1b inflammasome. In terms of processing, (Microbial infection) Cleavage by B.anthracis lethal toxin (LT) endopeptidase promotes ubiquitination and degradation of the N-terminal part, releasing the cleaved C-terminal part of the protein (NACHT, LRR and PYD domains-containing protein 1b, C-terminus), which polymerizes and forms the Nlrp1b inflammasome. In terms of tissue distribution, expressed in macrophages.

It localises to the cytoplasm. It is found in the cytosol. The protein localises to the inflammasome. Activated by cleavage by B.anthracis lethal toxin (LT) endopeptidase. Cleavage by LT promotes ubiquitination and degradation of the N-terminal part, releasing the cleaved C-terminal part of the protein (NACHT, LRR and PYD domains-containing protein 1b, C-terminus), which polymerizes and forms the Nlrp1b inflammasome. Nlrp1b inflammasome is inhibited by DPP8 and DPP9, which sequester the C-terminal fragment of Nlrp1b (NACHT, LRR and PYD domains-containing protein 1b, C-terminus) in a ternary complex, thereby preventing Nlrp1b oligomerization and activation. Nlrp1b inflammasome is activated by Val-boroPro (Talabostat, PT-100), an inhibitor of dipeptidyl peptidases DPP8 and DPP9. Val-boroPro relieves inhibition of DPP8 and/or DPP9 by promoting disruption of the ternary complex, releasing its C-terminal part from autoinhibition. Activated by metabolic inhibitors, such as 2-deoxy-D-glucose and sodium azide. Not activated by muramyl dipeptide, nor by full-length bacterial peptidoglycan. Its function is as follows. Acts as the sensor component of the Nlrp1b inflammasome, which mediates inflammasome activation in response to various pathogen-associated signals, leading to subsequent pyroptosis. Inflammasomes are supramolecular complexes that assemble in the cytosol in response to pathogens and other damage-associated signals and play critical roles in innate immunity and inflammation. Acts as a recognition receptor (PRR): recognizes specific pathogens and other damage-associated signals, such as B.anthracis lethal toxin (LT) or Val-boroPro inhibitor, and mediates the formation of the inflammasome polymeric complex. In response to pathogen-associated signals, the N-terminal part of Nlrp1b is degraded by the proteasome, releasing the cleaved C-terminal part of the protein (NACHT, LRR and PYD domains-containing protein 1b, C-terminus), which polymerizes to initiate the formation of the inflammasome complex: the inflammasome directly recruits pro-caspase-1 (proCASP1) independently of PYCARD/ASC and promotes caspase-1 (CASP1) activation, which subsequently cleaves and activates inflammatory cytokines IL1B and IL18 and gasdermin-D (GSDMD), leading to pyroptosis. In the absence of GSDMD expression, the Nlrp1b inflammasome is able to recruit and activate CASP8, leading to activation of gasdermin-E (GSDME). Activation of Nlrp1b inflammasome is also required for HMGB1 secretion; the active cytokines and HMGB1 stimulate inflammatory responses. Primary mediator of macrophage susceptibility to B.anthracis LT: in response to B.anthracis infection, macrophages and dendritic cells release IL1B and undergo pyroptosis. This early inflammatory response to the toxin increases resistance to infection by B.anthracis spores. Constitutes the precursor of the Nlrp1b inflammasome, which mediates autoproteolytic processing within the FIIND domain to generate the N-terminal and C-terminal parts, which are associated non-covalently in absence of pathogens and other damage-associated signals. Functionally, regulatory part that prevents formation of the Nlrp1b inflammasome: in absence of pathogens and other damage-associated signals, interacts with the C-terminal part of Nlrp1b (NACHT, LRR and PYD domains-containing protein 1b, C-terminus), preventing activation of the Nlrp1b inflammasome. In response to pathogen-associated signals, this part is ubiquitinated by the N-end rule pathway and degraded by the proteasome, releasing the cleaved C-terminal part of the protein, which polymerizes and forms the Nlrp1b inflammasome. In terms of biological role, constitutes the active part of the Nlrp1b inflammasome. In absence of pathogens and other damage-associated signals, interacts with the N-terminal part of Nlrp1b (NACHT, LRR and PYD domains-containing protein 1b, N-terminus), preventing activation of the Nlrp1b inflammasome. In response to pathogen-associated signals, the N-terminal part of Nlrp1b is degraded by the proteasome, releasing this form, which polymerizes to form the Nlrp1b inflammasome complex: the Nlrp1b inflammasome complex then directly recruits pro-caspase-1 (proCASP1) and promotes caspase-1 (CASP1) activation, leading to gasdermin-D (GSDMD) cleavage and subsequent pyroptosis. This Mus musculus (Mouse) protein is NACHT, LRR and PYD domains-containing protein 1b allele 5 (Nlrp1b).